A 538-amino-acid polypeptide reads, in one-letter code: Chaperonin GroEL 1 (538 aa).

ATP-binding positions include 29–32 (TLGP), 86–90 (DGTTT), Gly-413, 478–480 (NAA), and Asp-494.

The protein belongs to the chaperonin (HSP60) family. Forms a cylinder of 14 subunits composed of two heptameric rings stacked back-to-back. Interacts with the co-chaperonin GroES.

It localises to the cytoplasm. It carries out the reaction ATP + H2O + a folded polypeptide = ADP + phosphate + an unfolded polypeptide.. Its function is as follows. Together with its co-chaperonin GroES, plays an essential role in assisting protein folding. The GroEL-GroES system forms a nano-cage that allows encapsulation of the non-native substrate proteins and provides a physical environment optimized to promote and accelerate protein folding. The polypeptide is Chaperonin GroEL 1 (Corynebacterium glutamicum (strain R)).